The following is a 301-amino-acid chain: UDP-N-acetylenolpyruvoylglucosamine reductase 1 (301 aa).

The FAD-binding PCMH-type domain maps to Lys-29 to Gly-196. Residue Arg-174 is part of the active site. Ser-225 (proton donor) is an active-site residue. The active site involves Glu-295.

The protein belongs to the MurB family. FAD serves as cofactor.

The protein resides in the cytoplasm. It catalyses the reaction UDP-N-acetyl-alpha-D-muramate + NADP(+) = UDP-N-acetyl-3-O-(1-carboxyvinyl)-alpha-D-glucosamine + NADPH + H(+). It participates in cell wall biogenesis; peptidoglycan biosynthesis. In terms of biological role, cell wall formation. This Bacillus thuringiensis subsp. konkukian (strain 97-27) protein is UDP-N-acetylenolpyruvoylglucosamine reductase 1.